Reading from the N-terminus, the 464-residue chain is Argininosuccinate lyase (464 aa).

Ala-2 carries the post-translational modification N-acetylalanine. Lys-7 bears the N6-acetyllysine mark. A 2-(N(omega)-L-arginino)succinate-binding site is contributed by Ser-27. Residue Lys-69 is modified to N6-acetyllysine. Asn-114 and Thr-159 together coordinate 2-(N(omega)-L-arginino)succinate. His-160 functions as the Proton acceptor in the catalytic mechanism. Ser-281 (proton donor) is an active-site residue. Position 288 is an N6-acetyllysine (Lys-288). The 2-(N(omega)-L-arginino)succinate site is built by Asn-289, Tyr-321, Gln-326, and Lys-329.

It belongs to the lyase 1 family. Argininosuccinate lyase subfamily. In terms of assembly, homotetramer. Forms tissue-specific complexes with ASS1, SLC7A1, HSP90AA1 and nitric oxide synthase NOS1, NOS2 or NOS3; the complex maintenance is independent of ASL catalytic function. Post-translationally, acetylation modifies enzyme activity in response to alterations of extracellular nutrient availability. Acetylation increased with trichostin A (TSA) or with nicotinamide (NAM). Glucose increases acetylation by about a factor of 3 with decreasing enzyme activity. Acetylation on Lys-288 is decreased on the addition of extra amino acids resulting in activation of enzyme activity. Expressed in lung and brain (at protein level).

It carries out the reaction 2-(N(omega)-L-arginino)succinate = fumarate + L-arginine. The protein operates within amino-acid biosynthesis; L-arginine biosynthesis; L-arginine from L-ornithine and carbamoyl phosphate: step 3/3. It participates in nitrogen metabolism; urea cycle; L-arginine and fumarate from (N(omega)-L-arginino)succinate: step 1/1. Enzyme activity is regulated by acetylation. Functionally, catalyzes the reversible cleavage of L-argininosuccinate to fumarate and L-arginine, an intermediate step reaction in the urea cycle mostly providing for hepatic nitrogen detoxification into excretable urea as well as de novo L-arginine synthesis in nonhepatic tissues. Essential regulator of intracellular and extracellular L-arginine pools. As part of citrulline-nitric oxide cycle, forms tissue-specific multiprotein complexes with argininosuccinate synthase ASS1, transport protein SLC7A1 and nitric oxide synthase NOS1, NOS2 or NOS3, allowing for cell-autonomous L-arginine synthesis while channeling extracellular L-arginine to nitric oxide synthesis pathway. This is Argininosuccinate lyase (Asl) from Mus musculus (Mouse).